A 66-amino-acid polypeptide reads, in one-letter code: ATP synthase subunit c (66 aa).

A run of 2 helical transmembrane segments spans residues 3-23 (LTFL…GLLM) and 45-65 (FLGV…SFII).

It belongs to the ATPase C chain family. F-type ATPases have 2 components, F(1) - the catalytic core - and F(0) - the membrane proton channel. F(1) has five subunits: alpha(3), beta(3), gamma(1), delta(1), epsilon(1). F(0) has three main subunits: a(1), b(2) and c(10-14). The alpha and beta chains form an alternating ring which encloses part of the gamma chain. F(1) is attached to F(0) by a central stalk formed by the gamma and epsilon chains, while a peripheral stalk is formed by the delta and b chains.

It localises to the cell membrane. Functionally, f(1)F(0) ATP synthase produces ATP from ADP in the presence of a proton or sodium gradient. F-type ATPases consist of two structural domains, F(1) containing the extramembraneous catalytic core and F(0) containing the membrane proton channel, linked together by a central stalk and a peripheral stalk. During catalysis, ATP synthesis in the catalytic domain of F(1) is coupled via a rotary mechanism of the central stalk subunits to proton translocation. Key component of the F(0) channel; it plays a direct role in translocation across the membrane. A homomeric c-ring of between 10-14 subunits forms the central stalk rotor element with the F(1) delta and epsilon subunits. The polypeptide is ATP synthase subunit c (Streptococcus pneumoniae serotype 19F (strain G54)).